The chain runs to 573 residues: MLDDDCSPTSSSEMSNASSREASITSRSSSTSGNNSLPEDRGAVVQLPTLNPSDYRWHPFPGDSSVLQRKAIGVEALVGIRDANSRGEYDFYNNIVLRVGNALELTLTRLKRAFVKAMLDARFENPSIACYGVWGQNKEQYLPHIQYKSFKSQSEALAWANNCIIIQATSLTGSELRAERLKKRRAQAVPQPSNPLDIIIYADVANQRNRLEPGTEVNILFLFNHLIWDGKGRYFTSELVQRATTILDQEKENIMPTHRWGEEKSRLDPPILDVMLVNLDKMGPDYDLAHRKLLNSQLQVGLSWGLPLTRNPGEPLQIRHCISREDSTKITDAVRARLGPKYNIGHLGHAATVLSLLKNNPIPPSTQDTAFLFSPLPVDGRPYLLEERKTPRYGNAQAAAVVELQKLASWGIKSDNLNGVKVALDDLAKKVKEDYDYWLTNLVAWRFKSSCTSEFIAFGSAIYQTPYLDPGAPKVKVGTGTSTDMVFLKAFCNDGRAESIIAYTMHGPSGKELFQVDDCFGGVDVLGSNAFIRMDTWKDAIRLTLCYNSGCFSDAVANSFTTDVAQYMLAYSW.

The tract at residues 1 to 40 (MLDDDCSPTSSSEMSNASSREASITSRSSSTSGNNSLPED) is disordered. Low complexity predominate over residues 7–36 (SPTSSSEMSNASSREASITSRSSSTSGNNS).

The protein belongs to the trichothecene O-acetyltransferase family.

It functions in the pathway mycotoxin biosynthesis. Its function is as follows. Putative 15-O-acetyltransferase; part of the satratoxin SC2 cluster involved in the biosynthesis of satratoxins, trichothecene mycotoxins that are associated with human food poisonings. Satratoxins are suggested to be made by products of multiple gene clusters (SC1, SC2 and SC3) that encode 21 proteins in all, including polyketide synthases, acetyltransferases, and other enzymes expected to modify the trichothecene skeleton. SC1 encodes 10 proteins, SAT1 to SAT10. The largest are SAT8, which encodes a putative polyketide synthase (PKS) with a conventional non-reducing architecture, and SAT10, a putative protein containing four ankyrin repeats and thus may be involved in protein scaffolding. The putative short-chain reductase SAT3 may assist the PKS in some capacity. SAT6 contains a secretory lipase domain and acts probably as a trichothecene esterase. SAT5 encodes a putative acetyltransferase, and so, with SAT6, may affect endogenous protection from toxicity. The probable transcription factor SAT9 may regulate the expression of the SC1 cluster. SC2 encodes proteins SAT11 to SAT16, the largest of which encodes the putative reducing PKS SAT13. SAT11 is a cytochrome P450 monooxygenase, while SAT14 and SAT16 are probable acetyltransferases. The SC2 cluster may be regulated by the transcription factor SAT15. SC3 is a small cluster that encodes 5 proteins, SAT17 to SAT21. SAT21 is a putative MFS-type transporter which may have a role in exporting secondary metabolites. The four other proteins putatively encoded in SC3 include the taurine hydroxylase-like protein SAT17, the O-methyltransferase SAT18, the acetyltransferase SAT19, and the Cys6-type zinc finger SAT20, the latter being probably involved in regulation of SC3 expression. This chain is Putative 15-O-acetyltransferase SAT12, found in Stachybotrys chartarum (strain CBS 109288 / IBT 7711) (Toxic black mold).